A 1597-amino-acid chain; its full sequence is MAGLRRPQSGAYRRTAAAVNLLLGVFQVLLSCCRPGGAQGQAFEPLPNVVELWQAEEGELLLPTQGDSEEDMEEPSQEQSFSDKLFIGKGLHFQPSVLDFGIQFLGHPAAKLLYAYNPSRESEVVVNSVFTAARHFHVPPVHCRVIPAMGKASFRVIFLPTEEGSIESSLFINTSSHGVFSYHVSGVGTRRVSTEGSAEQLPNAYFLLPQVQSIQLSQTQAETTNTSLLRVQLECSLHNKVCQQLKSCSLGSDDALHLEMNIIVAVENSSKQPEENTQALLDHLSIVYVATDESDTSDESAVNMYVLHSGNSLIWIQDIHHFSQKNVLSLQFEPVLLSTSTTNFTKIASFTCKAGTSCDSGIMGLRKKKASPAMQACLSSPVVQGYFRTDASTAQFHIESHETATGVWSIWYRSHFDQSIVLKDVFVSKETKHILKVLSFRGPLFLPPGCWNIFSLKLAVKGIVLNLFTNVFLTTNTGAIFAIPLQIFSAPTKEGSLGFEVLAHCGMHYFMGKSKTENPNWERSLSLDRSTWDMDSELANKLYERWKKYKSGDACRRNVLGMSQFAFTKKSKETEPFVSFLPRVVPEPNLVLNFSATALRNSAVKYFVVRNPTPQPVSLQLLPLSLYPRPEAAVRLLHKWFGTDMQMVNLSTGEFQLTQACPYQGEPSEESSLGALHVHLQALETRRVGVVFTPADYGKVTSLILIRNNLTVVDMVGVEGFGAQELLKVGGRLPGAGGSLRFKVPESTLMDCHRQLKDSKQILSITKNFKVENIGPLPITVTSLKINGYNCQGYGFEVLDCHPFSLSPNTSRDISIVFTPDFTSSWVIRELTLVTAADLEFHFTLNVTLPHHMLPLCAEVVPGPSWEESFWRLTVFFVSLSLLGVILIAFQQAQYILMEFMKTRQRQNGSSSSQQNGDPVAMISSHPHKSTCKNFLDTYSPSDKGRGKSCLPVGPSLSRLQNAAKRSPATYGHSQKKHKCSFYYSKQKPSASAASSANVTTEEKQTVTLASSLSVAKEDICTNVLSENWVSLRYASGINGSLQKNLTLPKNVLHKEESSLKNTVVTNTPSECSMKEGVHTYMFPKETDSKISENVAELKEQEPCPQKTSKKPPESTLPKTPPQYLQSDLPEVSRKHGNKQQAPVRSEVDSFEPVRAADAEPSSVRKTQGASPEDTCSEKQDTPSAEQEDPSRKRKLQERREGSTQALNWNKTRPCRRNKKRASAQASSSPRPSEQSEQRLVCSDVRSWCAQDGAGEKCKAGTEVSGSSPERREEDSYYQKSEKKCADKFCSDSSSDCGSSSGSVRASRGSWGSWSSSSSDCDRRPVVDIQHFLPPGDGVSPQNFPSEASVPLSLPQHVCSSTDVSVLPEFTESPCPGLPATPAGAGEEKGLYPPGGLWPSQPVCLTSSFNCPVENGAPGVSQEPTSIPDSSFIDWSASCEGQFPSVYCPLELNDYNAFPEENMNYTNGFPCSSKVQTDFIGHSTPSTWNTPASMPAAWGHASLVNSPSYLTSTRSLSPMSGLFGSIWAPQSEVYETCCPISPATEHATHMENQVMCKEYYLGFNPFRAYMNLDIWTSTANRNANFPLSRDSSYCGNM.

An N-terminal signal peptide occupies residues 1–40 (MAGLRRPQSGAYRRTAAAVNLLLGVFQVLLSCCRPGGAQG). Residues 41 to 869 (QAFEPLPNVV…VVPGPSWEES (829 aa)) lie on the Extracellular side of the membrane. N-linked (GlcNAc...) asparagine glycans are attached at residues asparagine 343, asparagine 593, asparagine 709, and asparagine 846. The tract at residues 696-916 (DYGKVTSLIL…QNGSSSSQQN (221 aa)) is required for Wnt-signaling inhibition and LRP6 degradation. The helical transmembrane segment at 870 to 890 (FWRLTVFFVSLSLLGVILIAF) threads the bilayer. Over 891–1597 (QQAQYILMEF…SRDSSYCGNM (707 aa)) the chain is Cytoplasmic. Positions 907–917 (QNGSSSSQQNG) are enriched in low complexity. Disordered regions lie at residues 907-928 (QNGSSSSQQNGDPVAMISSHPH), 1096-1240 (AELK…EQRL), and 1252-1322 (DGAG…SDCD). The span at 1213–1222 (RPCRRNKKRA) shows a compositional bias: basic residues. Positions 1223-1239 (SAQASSSPRPSEQSEQR) are enriched in low complexity. The segment covering 1269–1290 (PERREEDSYYQKSEKKCADKFC) has biased composition (basic and acidic residues). Over residues 1291 to 1319 (SDSSSDCGSSSGSVRASRGSWGSWSSSSS) the composition is skewed to low complexity.

Belongs to the TMEM131 family.

Its subcellular location is the cell membrane. It is found in the endoplasmic reticulum. The protein resides in the cytoplasm. Functionally, in its membrane-associated form, antagonizes canonical Wnt signaling by triggering lysosome-dependent degradation of Wnt-activated LRP6. Regulates thymocyte proliferation. This chain is Transmembrane protein 131-like, found in Mus musculus (Mouse).